The chain runs to 317 residues: Ribosomal protein L11 methyltransferase (317 aa).

Residues threonine 158, glycine 179, aspartate 201, and asparagine 244 each contribute to the S-adenosyl-L-methionine site.

This sequence belongs to the methyltransferase superfamily. PrmA family.

It localises to the cytoplasm. The enzyme catalyses L-lysyl-[protein] + 3 S-adenosyl-L-methionine = N(6),N(6),N(6)-trimethyl-L-lysyl-[protein] + 3 S-adenosyl-L-homocysteine + 3 H(+). Its function is as follows. Methylates ribosomal protein L11. The chain is Ribosomal protein L11 methyltransferase from Streptococcus pyogenes serotype M5 (strain Manfredo).